The primary structure comprises 466 residues: Glutamate--tRNA ligase (466 aa).

Positions 10–20 (PSPTGALHIGG) match the 'HIGH' region motif. Residues Cys-99, Cys-101, Cys-126, and Asp-128 each contribute to the Zn(2+) site. Residues 239–243 (KLSKR) carry the 'KMSKS' region motif. Residue Lys-242 participates in ATP binding.

Belongs to the class-I aminoacyl-tRNA synthetase family. Glutamate--tRNA ligase type 1 subfamily. Monomer. Zn(2+) is required as a cofactor.

It localises to the cytoplasm. It carries out the reaction tRNA(Glu) + L-glutamate + ATP = L-glutamyl-tRNA(Glu) + AMP + diphosphate. In terms of biological role, catalyzes the attachment of glutamate to tRNA(Glu) in a two-step reaction: glutamate is first activated by ATP to form Glu-AMP and then transferred to the acceptor end of tRNA(Glu). This chain is Glutamate--tRNA ligase, found in Pelagibacter ubique (strain HTCC1062).